An 80-amino-acid polypeptide reads, in one-letter code: Large ribosomal subunit protein bL31B (80 aa).

It belongs to the bacterial ribosomal protein bL31 family. Type B subfamily. As to quaternary structure, part of the 50S ribosomal subunit.

The sequence is that of Large ribosomal subunit protein bL31B from Streptococcus pneumoniae serotype 2 (strain D39 / NCTC 7466).